We begin with the raw amino-acid sequence, 1101 residues long: Type VI secretion system component TssM1 (1101 aa).

Residues 371-391 form a helical membrane-spanning segment; sequence LTIGALSATALVVLAVTAVWI.

The protein resides in the cell inner membrane. Functionally, core component of the type VI (T6SS) secretion system that plays a role in the release of toxins targeting both eukaryotic and prokaryotic species. Plays an essential role in stabilization of assembled TssK1 structure at a fixed perimembrane site. This is Type VI secretion system component TssM1 from Pseudomonas aeruginosa (strain ATCC 15692 / DSM 22644 / CIP 104116 / JCM 14847 / LMG 12228 / 1C / PRS 101 / PAO1).